The chain runs to 239 residues: Ankyrin repeat domain-containing protein 49 (239 aa).

The residue at position 49 (serine 49) is a Phosphoserine. ANK repeat units lie at residues 73-103 (DPSR…HVNT), 107-136 (DEYT…DVHA), 140-169 (DGWT…DINA), and 173-206 (GLLT…GLKN).

Widely expressed in fetus, at a high level in fetal liver, brain and lung.

It is found in the nucleus. In terms of biological role, induces HBG1 expression. May have a role in spermatogenesis where it promotes autophagy in response to serum starvation, via the NF-kappaB pathway. This chain is Ankyrin repeat domain-containing protein 49 (ANKRD49), found in Homo sapiens (Human).